The following is a 105-amino-acid chain: Large ribosomal subunit protein bL21c (105 aa).

Belongs to the bacterial ribosomal protein bL21 family. In terms of assembly, part of the 50S ribosomal subunit.

The protein localises to the plastid. Its subcellular location is the chloroplast. Its function is as follows. This protein binds to 23S rRNA. In Trieres chinensis (Marine centric diatom), this protein is Large ribosomal subunit protein bL21c.